The primary structure comprises 473 residues: Phosphatidylserine synthase 1 (473 aa).

An N-acetylalanine modification is found at Ala2. Residues 2–35 (ASCVGSRTLSKDDVNYKMHFRMINEQQVEDITID) lie on the Cytoplasmic side of the membrane. Residues 36–56 (FFYRPHTITLLSFTIVSLMYF) form a helical membrane-spanning segment. At 57–72 (AFTRDDSVPEDNIWRG) the chain is on the lumenal side. The helical transmembrane segment at 73–93 (ILSVIFFFLIISVLAFPNGPF) threads the bilayer. At 94–102 (TRPHPALWR) the chain is on the cytoplasmic side. Residues 103 to 123 (MVFGLSVLYFLFLVFLLFLNF) form a helical membrane-spanning segment. Residues 124-186 (EQVKSLMYWL…AMKALLIRSY (63 aa)) lie on the Lumenal side of the membrane. Residues 187 to 207 (GLCWTISITWELTELFFMHLL) form a helical membrane-spanning segment. The Cytoplasmic segment spans residues 208–216 (PNFAECWWD). The helical transmembrane segment at 217-237 (QVILDILLCNGGGIWLGMVVC) threads the bilayer. Residues 238–286 (RFLEMRTYHWASFKDIHTTTGKIKRAVLQFTPASWTYVRWFDPKSSFQR) are Lumenal-facing. The chain crosses the membrane as a helical span at residues 287–307 (VAGVYLFMIIWQLTELNTFFL). Residues 308 to 319 (KHIFVFQASHPL) lie on the Cytoplasmic side of the membrane. Residues 320–342 (SWGRILFIGGITAPTVRQYYAYL) traverse the membrane as a helical segment. Residues 343 to 355 (TDTQCKRVGTQCW) lie on the Lumenal side of the membrane. A helical membrane pass occupies residues 356–376 (VFGVIGFLEAIVCIKFGQDLF). The Cytoplasmic portion of the chain corresponds to 377-383 (SKTQILY). A helical transmembrane segment spans residues 384–404 (VVLWLLCVAFTTFLCLYGMIW). The Lumenal segment spans residues 405 to 473 (YAEHYGHREK…SKVTNGVGKK (69 aa)). Phosphoserine is present on residues Ser417, Ser425, Ser442, and Ser454. Residues 430 to 473 (WHHRKGTKGSEDSPPKHAGNNESHSSRRRNRHSKSKVTNGVGKK) are disordered. Positions 455-464 (SRRRNRHSKS) are enriched in basic residues.

The protein belongs to the phosphatidyl serine synthase family.

It localises to the endoplasmic reticulum membrane. It catalyses the reaction a 1,2-diacyl-sn-glycero-3-phosphoethanolamine + L-serine = a 1,2-diacyl-sn-glycero-3-phospho-L-serine + ethanolamine. The enzyme catalyses a 1,2-diacyl-sn-glycero-3-phosphocholine + L-serine = a 1,2-diacyl-sn-glycero-3-phospho-L-serine + choline. Its pathway is phospholipid metabolism; phosphatidylserine biosynthesis. Requires calcium ions. Inhibited by exogenous phosphatidylserine. Functionally, catalyzes a base-exchange reaction in which the polar head group of phosphatidylethanolamine (PE) or phosphatidylcholine (PC) is replaced by L-serine. Catalyzes mainly the conversion of phosphatidylcholine. Also converts, in vitro and to a lesser extent, phosphatidylethanolamine. This is Phosphatidylserine synthase 1 (PTDSS1) from Homo sapiens (Human).